The chain runs to 294 residues: Elongation factor Ts (294 aa).

Residues 80–83 (TDFV) form an involved in Mg(2+) ion dislocation from EF-Tu region.

The protein belongs to the EF-Ts family.

The protein localises to the cytoplasm. In terms of biological role, associates with the EF-Tu.GDP complex and induces the exchange of GDP to GTP. It remains bound to the aminoacyl-tRNA.EF-Tu.GTP complex up to the GTP hydrolysis stage on the ribosome. In Listeria monocytogenes serovar 1/2a (strain ATCC BAA-679 / EGD-e), this protein is Elongation factor Ts.